The primary structure comprises 519 residues: Polyamine aminopropyltransferase (519 aa).

Transmembrane regions (helical) follow at residues 17-37 (LLLV…LALV), 53-73 (LIVA…KPFL), 86-106 (LLGL…AVVG), 109-129 (LWML…ELPL), 158-178 (LGAL…LGMM), 180-200 (GAAA…CVLL), and 208-228 (QFIR…TVLV). The spermidine synthase stretch occupies residues 200–463 (LRHLLPRAQF…FQLCGPEGTE (264 aa)). Residues 225-459 (TVLVRSDGIV…GDWGFQLCGP (235 aa)) enclose the PABS domain. Gln255 serves as a coordination point for S-methyl-5'-thioadenosine. Asp307 contributes to the spermidine binding site. S-methyl-5'-thioadenosine-binding positions include Glu326 and 358–359 (DA). Catalysis depends on Asp379, which acts as the Proton acceptor.

The protein belongs to the spermidine/spermine synthase family. In terms of assembly, homodimer or homotetramer.

The protein resides in the cell membrane. The catalysed reaction is S-adenosyl 3-(methylsulfanyl)propylamine + putrescine = S-methyl-5'-thioadenosine + spermidine + H(+). The protein operates within amine and polyamine biosynthesis; spermidine biosynthesis; spermidine from putrescine: step 1/1. Functionally, catalyzes the irreversible transfer of a propylamine group from the amino donor S-adenosylmethioninamine (decarboxy-AdoMet) to putrescine (1,4-diaminobutane) to yield spermidine. The sequence is that of Polyamine aminopropyltransferase from Corynebacterium efficiens (strain DSM 44549 / YS-314 / AJ 12310 / JCM 11189 / NBRC 100395).